The primary structure comprises 92 residues: Small ribosomal subunit protein uS19 (92 aa).

The protein belongs to the universal ribosomal protein uS19 family.

In terms of biological role, protein S19 forms a complex with S13 that binds strongly to the 16S ribosomal RNA. The polypeptide is Small ribosomal subunit protein uS19 (Acidiphilium cryptum (strain JF-5)).